Reading from the N-terminus, the 472-residue chain is Serine/threonine-protein kinase ULK3 (472 aa).

The Protein kinase domain maps to 14–270 (FILTERLGSG…FQDFFAHPWV (257 aa)). Residues 20–28 (LGSGTYATV) and lysine 44 each bind ATP. Aspartate 137 serves as the catalytic Proton acceptor. Phosphoserine is present on serine 176. Residues 280–348 (SLGRATALVV…SRAEELKAIV (69 aa)) form the MIT 1 domain. A phosphoserine; by autocatalysis mark is found at serine 300, serine 350, serine 384, and serine 464. Positions 375-444 (RLLAALEVAS…ARAEYLKEQV (70 aa)) constitute an MIT 2 domain.

This sequence belongs to the protein kinase superfamily. Ser/Thr protein kinase family. APG1/unc-51/ULK1 subfamily. As to quaternary structure, interacts (via protein kinase domain) with SUFU. In terms of processing, autophosphorylated. Autophosphorylation is blocked by interaction with SUFU. In terms of tissue distribution, widely expressed. Highest levels observed in fetal brain. In adult tissues, high levels in brain, liver and kidney, moderate levels in testis and adrenal gland and low levels in heart, lung, stomach, thymus, prostate and placenta. In the brain, highest expression in the hippocampus, high levels also detected in the cerebellum, olfactory bulb and optic nerve. In the central nervous system, lowest levels in the spinal cord.

The protein localises to the cytoplasm. It carries out the reaction L-seryl-[protein] + ATP = O-phospho-L-seryl-[protein] + ADP + H(+). The catalysed reaction is L-threonyl-[protein] + ATP = O-phospho-L-threonyl-[protein] + ADP + H(+). In terms of biological role, serine/threonine protein kinase that acts as a regulator of Sonic hedgehog (SHH) signaling and autophagy. Acts as a negative regulator of SHH signaling in the absence of SHH ligand: interacts with SUFU, thereby inactivating the protein kinase activity and preventing phosphorylation of GLI proteins (GLI1, GLI2 and/or GLI3). Positively regulates SHH signaling in the presence of SHH: dissociates from SUFU, autophosphorylates and mediates phosphorylation of GLI2, activating it and promoting its nuclear translocation. Phosphorylates in vitro GLI2, as well as GLI1 and GLI3, although less efficiently. Also acts as a regulator of autophagy: following cellular senescence, able to induce autophagy. The sequence is that of Serine/threonine-protein kinase ULK3 (ULK3) from Homo sapiens (Human).